We begin with the raw amino-acid sequence, 521 residues long: Cytochrome b5 reductase 4 (521 aa).

Position 1 is an N-acetylmethionine (Met1). Polar residues predominate over residues 1–18 (MLNVPSQSFPAPRSQQRV). The disordered stretch occupies residues 1–27 (MLNVPSQSFPAPRSQQRVASGGRSKVP). One can recognise a Cytochrome b5 heme-binding domain in the interval 54-130 (LIEVTEEELK…LKECLVGRMA (77 aa)). 2 residues coordinate heme: His89 and His112. The CS domain occupies 165–256 (PSYPSYDWFQ…KENTSWDFLG (92 aa)). Residues 273 to 385 (LYYRKCQLIS…SSPEGNFKIS (113 aa)) enclose the FAD-binding FR-type domain. Residues 365 to 380 (DRLQ…SPEG) and 392 to 424 (DLFL…KVKL) contribute to the FAD site.

This sequence belongs to the flavoprotein pyridine nucleotide cytochrome reductase family. It depends on FAD as a cofactor. In terms of tissue distribution, widely expressed.

Its subcellular location is the endoplasmic reticulum. It carries out the reaction 2 Fe(III)-[cytochrome b5] + NADH = 2 Fe(II)-[cytochrome b5] + NAD(+) + H(+). NADH-cytochrome b5 reductase involved in endoplasmic reticulum stress response pathway. Plays a critical role in protecting pancreatic beta-cells against oxidant stress, possibly by protecting the cell from excess buildup of reactive oxygen species (ROS). Reduces a variety of substrates in vitro, such as cytochrome c, feericyanide and methemoglobin. The chain is Cytochrome b5 reductase 4 from Homo sapiens (Human).